The chain runs to 257 residues: Phycoerythrobilin:ferredoxin oxidoreductase (257 aa).

This sequence belongs to the HY2 family.

It catalyses the reaction (3Z)-phycoerythrobilin + oxidized 2[4Fe-4S]-[ferredoxin] = 15,16-dihydrobiliverdin + reduced 2[4Fe-4S]-[ferredoxin] + 2 H(+). Its function is as follows. Catalyzes the two-electron reduction of the C2 and C3(1) diene system of 15,16-dihydrobiliverdin. This Synechococcus sp. (strain CC9311) protein is Phycoerythrobilin:ferredoxin oxidoreductase.